We begin with the raw amino-acid sequence, 135 residues long: RuBisCO chaperone RbcX (135 aa).

Positions 103–135 are disordered; the sequence is QHLERMTQVSLSHPSPESEQQQFSDPDWDNLAS. Over residues 109–126 the composition is skewed to polar residues; it reads TQVSLSHPSPESEQQQFS.

This sequence belongs to the RbcX family. As to quaternary structure, homodimer. Interacts with the exposed C-terminal peptide of RbcL ('Glu-459-Asp-468'); binds 1 RbcL peptide per homodimer. Contacts a second RbcL monomer via its peripheral polar surface. A slightly longer RbcL peptide binds to RbcX2 with a higher affinity.

It localises to the carboxysome. The protein localises to the cytoplasm. Functionally, an RbcL-specific chaperone. The central cleft of the RbcX homodimer (RbcX2) binds the C-terminus of an RbcL monomer, stabilizing the C-terminus and probably preventing its reassociation with chaperonin GroEL-ES. At the same time the peripheral region of RbcX2 binds a second RbcL monomer, bridging the RbcL homodimers in the correct orientation. The RbcX2(2)-bound RbcL dimers then assemble into the RbcL8 core (RbcL8-(RbcX2)8). RbcS binding triggers the release of RbcX2. Its function is as follows. Required for optimal reconstitution of RuBisCO upon expression of rbcL-rbcS subunits in E.coli. The sequence is that of RuBisCO chaperone RbcX from Anabaena sp. (strain CA / ATCC 33047).